Consider the following 96-residue polypeptide: Small ribosomal subunit protein bS6 (96 aa).

Belongs to the bacterial ribosomal protein bS6 family.

Functionally, binds together with bS18 to 16S ribosomal RNA. The protein is Small ribosomal subunit protein bS6 of Streptococcus gordonii (strain Challis / ATCC 35105 / BCRC 15272 / CH1 / DL1 / V288).